A 428-amino-acid chain; its full sequence is Enolase (428 aa).

Q163 contacts (2R)-2-phosphoglycerate. E205 serves as the catalytic Proton donor. Mg(2+)-binding residues include D242, E284, and D311. K336, R365, S366, and K387 together coordinate (2R)-2-phosphoglycerate. K336 (proton acceptor) is an active-site residue.

Belongs to the enolase family. It depends on Mg(2+) as a cofactor.

Its subcellular location is the cytoplasm. It is found in the secreted. The protein resides in the cell surface. It carries out the reaction (2R)-2-phosphoglycerate = phosphoenolpyruvate + H2O. It participates in carbohydrate degradation; glycolysis; pyruvate from D-glyceraldehyde 3-phosphate: step 4/5. Catalyzes the reversible conversion of 2-phosphoglycerate (2-PG) into phosphoenolpyruvate (PEP). It is essential for the degradation of carbohydrates via glycolysis. In Tropheryma whipplei (strain TW08/27) (Whipple's bacillus), this protein is Enolase.